We begin with the raw amino-acid sequence, 783 residues long: Lon protease (783 aa).

In terms of domain architecture, Lon N-terminal spans 16 to 210 (LPLLASRGVV…KLLEIIKDEI (195 aa)). 361–368 (GAPGVGKT) is an ATP binding site. One can recognise a Lon proteolytic domain in the interval 597–778 (KDRVGVATGM…DQVLDLILGG (182 aa)). Active-site residues include Ser684 and Lys727.

This sequence belongs to the peptidase S16 family. Homohexamer. Organized in a ring with a central cavity.

It is found in the cytoplasm. The catalysed reaction is Hydrolysis of proteins in presence of ATP.. Its function is as follows. ATP-dependent serine protease that mediates the selective degradation of mutant and abnormal proteins as well as certain short-lived regulatory proteins. Required for cellular homeostasis and for survival from DNA damage and developmental changes induced by stress. Degrades polypeptides processively to yield small peptide fragments that are 5 to 10 amino acids long. Binds to DNA in a double-stranded, site-specific manner. In Halothermothrix orenii (strain H 168 / OCM 544 / DSM 9562), this protein is Lon protease.